Here is a 462-residue protein sequence, read N- to C-terminus: Glycine--tRNA ligase (462 aa).

Residues Arg-100 and Glu-174 each coordinate substrate. ATP-binding positions include 206–208 (RNE), 216–221 (FRTREF), 290–291 (EL), and 334–337 (GADR). 221 to 225 (FEQME) provides a ligand contact to substrate. 330 to 334 (EPSLG) contacts substrate.

The protein belongs to the class-II aminoacyl-tRNA synthetase family. As to quaternary structure, homodimer.

Its subcellular location is the cytoplasm. It catalyses the reaction tRNA(Gly) + glycine + ATP = glycyl-tRNA(Gly) + AMP + diphosphate. In terms of biological role, catalyzes the attachment of glycine to tRNA(Gly). This chain is Glycine--tRNA ligase, found in Acetivibrio thermocellus (strain ATCC 27405 / DSM 1237 / JCM 9322 / NBRC 103400 / NCIMB 10682 / NRRL B-4536 / VPI 7372) (Clostridium thermocellum).